We begin with the raw amino-acid sequence, 113 residues long: Coat protein TP1 (113 aa).

The protein resides in the virion. This Thermoproteus tenax virus 1 (strain KRA1) (TTV1) protein is Coat protein TP1.